Consider the following 231-residue polypeptide: Endonuclease NucS (231 aa).

It belongs to the NucS endonuclease family.

It localises to the cytoplasm. Its function is as follows. Cleaves both 3' and 5' ssDNA extremities of branched DNA structures. The polypeptide is Endonuclease NucS (Arthrobacter sp. (strain FB24)).